Reading from the N-terminus, the 90-residue chain is DNA-binding protein HTa (90 aa).

Belongs to the bacterial histone-like protein family. As to quaternary structure, homotetramer.

In terms of biological role, histone-like DNA-binding protein which is capable of wrapping DNA to stabilize it, and thus to prevent its denaturation under extreme environmental conditions. This Thermoplasma acidophilum (strain ATCC 25905 / DSM 1728 / JCM 9062 / NBRC 15155 / AMRC-C165) protein is DNA-binding protein HTa.